Consider the following 276-residue polypeptide: Type II pantothenate kinase (276 aa).

Asp-8–Lys-15 serves as a coordination point for ATP. Glu-76 serves as the catalytic Proton acceptor. ATP is bound by residues Thr-105, Gly-127–Met-131, Phe-143, and Ser-230.

This sequence belongs to the type II pantothenate kinase family. In terms of assembly, homodimer.

It localises to the cytoplasm. It carries out the reaction (R)-pantothenate + ATP = (R)-4'-phosphopantothenate + ADP + H(+). Its pathway is cofactor biosynthesis; coenzyme A biosynthesis; CoA from (R)-pantothenate: step 1/5. Catalyzes the phosphorylation of pantothenate (Pan), the first step in CoA biosynthesis. The sequence is that of Type II pantothenate kinase from Bacillus cereus (strain ATCC 10987 / NRS 248).